We begin with the raw amino-acid sequence, 94 residues long: Co-chaperonin GroES (94 aa).

This sequence belongs to the GroES chaperonin family. Heptamer of 7 subunits arranged in a ring. Interacts with the chaperonin GroEL.

The protein localises to the cytoplasm. Together with the chaperonin GroEL, plays an essential role in assisting protein folding. The GroEL-GroES system forms a nano-cage that allows encapsulation of the non-native substrate proteins and provides a physical environment optimized to promote and accelerate protein folding. GroES binds to the apical surface of the GroEL ring, thereby capping the opening of the GroEL channel. The chain is Co-chaperonin GroES from Clostridium kluyveri (strain NBRC 12016).